The chain runs to 347 residues: Probable arabinogalactan endo-beta-1,4-galactanase A (347 aa).

An N-terminal signal peptide occupies residues 1 to 16; sequence MLFSYLLATLPLLANA. The active-site Proton donor is the Glu-150. The active-site Nucleophile is Glu-260.

It belongs to the glycosyl hydrolase 53 family.

It localises to the secreted. It carries out the reaction The enzyme specifically hydrolyzes (1-&gt;4)-beta-D-galactosidic linkages in type I arabinogalactans.. Endogalactanase involved in the degradation of plant cell wall polysaccharides, and more particularly of hairy regions of pectin. In Aspergillus flavus (strain ATCC 200026 / FGSC A1120 / IAM 13836 / NRRL 3357 / JCM 12722 / SRRC 167), this protein is Probable arabinogalactan endo-beta-1,4-galactanase A (galA).